The chain runs to 144 residues: Transcription antitermination protein NusB (144 aa).

The protein belongs to the NusB family.

Involved in transcription antitermination. Required for transcription of ribosomal RNA (rRNA) genes. Binds specifically to the boxA antiterminator sequence of the ribosomal RNA (rrn) operons. This chain is Transcription antitermination protein NusB, found in Leifsonia xyli subsp. xyli (strain CTCB07).